The following is a 336-amino-acid chain: Glucokinase (336 aa).

13–18 (ADVGGT) is an ATP binding site.

Belongs to the bacterial glucokinase family.

Its subcellular location is the cytoplasm. It catalyses the reaction D-glucose + ATP = D-glucose 6-phosphate + ADP + H(+). This is Glucokinase from Cupriavidus metallidurans (strain ATCC 43123 / DSM 2839 / NBRC 102507 / CH34) (Ralstonia metallidurans).